The following is a 222-amino-acid chain: Small ribosomal subunit protein eS1 (222 aa).

The protein belongs to the eukaryotic ribosomal protein eS1 family.

The sequence is that of Small ribosomal subunit protein eS1 from Pyrobaculum calidifontis (strain DSM 21063 / JCM 11548 / VA1).